Here is a 510-residue protein sequence, read N- to C-terminus: uncharacterized protein (510 aa).

Disordered regions lie at residues 1–154 (MGSP…ATFL), 208–227 (DGNHGNQAKNSGPAETGDLA), 234–276 (TRES…QGIL), and 368–480 (NFYT…GCPR). S43 bears the Phosphoserine mark. Over residues 50 to 60 (PLVSQQDTSEA) the composition is skewed to polar residues. Over residues 78–92 (EEERLGSPEDEKMDG) the composition is skewed to basic and acidic residues. Phosphoserine is present on S84. 2 stretches are compositionally biased toward polar residues: residues 97-109 (SQPSVETEQQVAN) and 118-135 (QPSSESFCAETETGSNRR). Position 120 is a phosphoserine (S120). Positions 139–151 (ASGSEEAKAASAA) are enriched in low complexity. The segment covering 243–255 (SSLLTTTRGLTSG) has biased composition (low complexity). The segment covering 379-395 (RTKELQLVAKEDTDSTR) has biased composition (basic and acidic residues). Over residues 414-441 (SVHQEFSSGDINTRSLQDPGNSQSSGLS) the composition is skewed to polar residues.

This is an uncharacterized protein from Rattus norvegicus (Rat).